A 234-amino-acid chain; its full sequence is Biosynthetic peptidoglycan transglycosylase (234 aa).

A helical membrane pass occupies residues 8–28 (VIGCFAAGVVALNLYFFAAIA).

Belongs to the glycosyltransferase 51 family.

It is found in the cell inner membrane. The enzyme catalyses [GlcNAc-(1-&gt;4)-Mur2Ac(oyl-L-Ala-gamma-D-Glu-L-Lys-D-Ala-D-Ala)](n)-di-trans,octa-cis-undecaprenyl diphosphate + beta-D-GlcNAc-(1-&gt;4)-Mur2Ac(oyl-L-Ala-gamma-D-Glu-L-Lys-D-Ala-D-Ala)-di-trans,octa-cis-undecaprenyl diphosphate = [GlcNAc-(1-&gt;4)-Mur2Ac(oyl-L-Ala-gamma-D-Glu-L-Lys-D-Ala-D-Ala)](n+1)-di-trans,octa-cis-undecaprenyl diphosphate + di-trans,octa-cis-undecaprenyl diphosphate + H(+). It participates in cell wall biogenesis; peptidoglycan biosynthesis. Peptidoglycan polymerase that catalyzes glycan chain elongation from lipid-linked precursors. The sequence is that of Biosynthetic peptidoglycan transglycosylase from Ralstonia nicotianae (strain ATCC BAA-1114 / GMI1000) (Ralstonia solanacearum).